The sequence spans 198 residues: Glycerol-3-phosphate acyltransferase (198 aa).

4 consecutive transmembrane segments (helical) span residues Thr-4–Gly-24, Leu-71–Gly-91, Leu-113–Phe-133, and Val-147–Leu-167.

This sequence belongs to the PlsY family. In terms of assembly, probably interacts with PlsX.

It is found in the cell membrane. It carries out the reaction an acyl phosphate + sn-glycerol 3-phosphate = a 1-acyl-sn-glycero-3-phosphate + phosphate. It functions in the pathway lipid metabolism; phospholipid metabolism. Functionally, catalyzes the transfer of an acyl group from acyl-phosphate (acyl-PO(4)) to glycerol-3-phosphate (G3P) to form lysophosphatidic acid (LPA). This enzyme utilizes acyl-phosphate as fatty acyl donor, but not acyl-CoA or acyl-ACP. This Bacillus cereus (strain G9842) protein is Glycerol-3-phosphate acyltransferase.